We begin with the raw amino-acid sequence, 395 residues long: D-serine dehydratase (395 aa).

Lys-46 carries the post-translational modification N6-(pyridoxal phosphate)lysine. Positions 184, 191, 232, 254, and 255 each coordinate pyridoxal 5'-phosphate. 2 residues coordinate Zn(2+): His-365 and Cys-367.

Belongs to the DSD1 family. Requires pyridoxal 5'-phosphate as cofactor. Zn(2+) serves as cofactor.

It carries out the reaction D-serine = pyruvate + NH4(+). Catalyzes the conversion of D-serine to pyruvate and ammonia. Plays a role in D-serine detoxification. In Dictyostelium discoideum (Social amoeba), this protein is D-serine dehydratase.